Here is a 151-residue protein sequence, read N- to C-terminus: Large ribosomal subunit protein bL9 (151 aa).

The protein belongs to the bacterial ribosomal protein bL9 family.

Binds to the 23S rRNA. The polypeptide is Large ribosomal subunit protein bL9 (Francisella tularensis subsp. holarctica (strain LVS)).